The following is a 367-amino-acid chain: MTSRNYLLLTPGPLTTSRTVKEAMLFDSCTWDDDYNIGVVEQIRQQLTEMATASEGYTSVLLQGSGSYAVEAVLGSALGPQDKVLIVSNGAYGARMVEMAGLMGIAHHAYDCGEVARPDVQAIDAILNADPTISHIAMVHSETTTGMLNPIDEVGTLAHRYGKTYIVDAMSSFGGIPMDIAALHIDYLISSANKCIQGVPGFAFVIAREQKLAACKGRSRSLSLDLYAQWRCMEDNHGKWRFTSPTHTVLAFAQALKELAKEGGVAARHQRYQQNQRSLVAGMRALGFNTLLDDELHSPIITAFYSPEDPQYRFSEFYRRLKEQGFVIYPGKVSQSDCFRIGNIGEVYAADITALLTAIRTAMYWTK.

The residue at position 194 (K194) is an N6-(pyridoxal phosphate)lysine.

This sequence belongs to the class-V pyridoxal-phosphate-dependent aminotransferase family. PhnW subfamily. Homodimer. The cofactor is pyridoxal 5'-phosphate.

The enzyme catalyses (2-aminoethyl)phosphonate + pyruvate = phosphonoacetaldehyde + L-alanine. Involved in phosphonate degradation. The protein is 2-aminoethylphosphonate--pyruvate transaminase of Salmonella gallinarum (strain 287/91 / NCTC 13346).